A 132-amino-acid chain; its full sequence is Ribonuclease P protein component (132 aa).

Belongs to the RnpA family. In terms of assembly, consists of a catalytic RNA component (M1 or rnpB) and a protein subunit.

It carries out the reaction Endonucleolytic cleavage of RNA, removing 5'-extranucleotides from tRNA precursor.. Its function is as follows. RNaseP catalyzes the removal of the 5'-leader sequence from pre-tRNA to produce the mature 5'-terminus. It can also cleave other RNA substrates such as 4.5S RNA. The protein component plays an auxiliary but essential role in vivo by binding to the 5'-leader sequence and broadening the substrate specificity of the ribozyme. The protein is Ribonuclease P protein component of Marinobacter nauticus (strain ATCC 700491 / DSM 11845 / VT8) (Marinobacter aquaeolei).